Reading from the N-terminus, the 600-residue chain is Zinc finger and BTB domain-containing protein 46 (600 aa).

One can recognise a BTB domain in the interval C31 to S99. Positions R173–G222 are disordered. The segment covering G197–G207 has biased composition (basic and acidic residues). A Glycyl lysine isopeptide (Lys-Gly) (interchain with G-Cter in SUMO2) cross-link involves residue K229. A Phosphoserine modification is found at S234. The disordered stretch occupies residues P235 to T278. Residues L243 to G259 show a composition bias toward polar residues. 2 C2H2-type zinc fingers span residues F418–H436 and Y446–H468. The interval L513–S600 is disordered. A compositionally biased stretch (acidic residues) spans Y533–D555. Composition is skewed to basic and acidic residues over residues V556–D574 and E591–S600.

Sumoylated. Desumoylation by DESI1 reverses transcriptional repression activity.

Its subcellular location is the nucleus. Functionally, functions as a transcriptional repressor for PRDM1. This chain is Zinc finger and BTB domain-containing protein 46 (Zbtb46), found in Mus musculus (Mouse).